A 565-amino-acid chain; its full sequence is MLKKIGNDLSFFTGYLTFRTYDSIWRKATLPMYSKLKENLRKPTKTCLPQNDLDYRLRHTLIRQNARHYQSIKNTFINIPTFELNTFLKKEFHSNIILASPTLSFSILDYLNDGRIINSDKDIRKIVKKFRLIDSMTRLTDYNAYQLNPAIDILKILDDNTRNKLLGLFDDAIFYSLDIESFVTNFSDKKYYFQDCEAINKQFNYDVYGLYVPYDDNGKKRLQIETIILVDRRTDNTKTYVFQSNFSQWEIIRNNYINWTRTMSSVYEHQLGSNVYCQNTLYHMRKTLAKTHPITVLMKPFMEGVYFTNKVFTSFGISIADTENEVVNRYMDRVELFDLSNQTMIQALEYIHKTDGYKLLDYKKVYHENGVDDIYFEQKQLLEDLYQIVFDLVTNVFEYYYQSTDDYVKDNELRDFYLSIKNDLTFVEDLQQKDNAIKFFSNIIFLSSIRHSKNHINYAYLNSFYDYALRKTNFDLLLDKLDNGIPFDEKDCLSTVGDFYSKYSSGIYPSVPINLFGTGYKNLFADNEVQKFFTDVTNKLNQLKKNTERNNYTEFLFRLQNSNTI.

This is an uncharacterized protein from Acanthamoeba polyphaga (Amoeba).